A 144-amino-acid polypeptide reads, in one-letter code: Ig heavy chain V region M167 (144 aa).

The signal sequence occupies residues 1 to 19 (MKMWLNWVFLLTLLHGIQC). The Ig-like domain occupies 20–133 (EVKVVESGGG…GNSYFGYFDV (114 aa)).

This is Ig heavy chain V region M167 from Mus musculus (Mouse).